The primary structure comprises 313 residues: Dihydroorotate dehydrogenase B (NAD(+)), catalytic subunit (313 aa).

FMN contacts are provided by residues S21 and 45-46 (KA). Residues K45 and 69 to 73 (NAIGL) each bind substrate. Residues N99 and N127 each coordinate FMN. A substrate-binding site is contributed by N127. C130 (nucleophile) is an active-site residue. FMN-binding residues include K165 and I191. 192-193 (NT) is a substrate binding site. FMN contacts are provided by residues G217, 243 to 244 (GG), and 265 to 266 (GT).

Belongs to the dihydroorotate dehydrogenase family. Type 1 subfamily. In terms of assembly, heterotetramer of 2 PyrK and 2 PyrD type B subunits. The cofactor is FMN.

The protein localises to the cytoplasm. The catalysed reaction is (S)-dihydroorotate + NAD(+) = orotate + NADH + H(+). It functions in the pathway pyrimidine metabolism; UMP biosynthesis via de novo pathway; orotate from (S)-dihydroorotate (NAD(+) route): step 1/1. Functionally, catalyzes the conversion of dihydroorotate to orotate with NAD(+) as electron acceptor. The protein is Dihydroorotate dehydrogenase B (NAD(+)), catalytic subunit (pyrD) of Geobacillus sp. (strain WCH70).